Reading from the N-terminus, the 474-residue chain is Probable glycine dehydrogenase (decarboxylating) subunit 2 (474 aa).

Position 262 is an N6-(pyridoxal phosphate)lysine (lysine 262).

The protein belongs to the GcvP family. C-terminal subunit subfamily. The glycine cleavage system is composed of four proteins: P, T, L and H. In this organism, the P 'protein' is a heterodimer of two subunits. Pyridoxal 5'-phosphate serves as cofactor.

It carries out the reaction N(6)-[(R)-lipoyl]-L-lysyl-[glycine-cleavage complex H protein] + glycine + H(+) = N(6)-[(R)-S(8)-aminomethyldihydrolipoyl]-L-lysyl-[glycine-cleavage complex H protein] + CO2. In terms of biological role, the glycine cleavage system catalyzes the degradation of glycine. The P protein binds the alpha-amino group of glycine through its pyridoxal phosphate cofactor; CO(2) is released and the remaining methylamine moiety is then transferred to the lipoamide cofactor of the H protein. The protein is Probable glycine dehydrogenase (decarboxylating) subunit 2 of Thermotoga petrophila (strain ATCC BAA-488 / DSM 13995 / JCM 10881 / RKU-1).